A 485-amino-acid polypeptide reads, in one-letter code: Tektin-5 (485 aa).

Coiled coils occupy residues 114–185 (RLTD…EVNC), 225–247 (QEQM…DAQH), 307–385 (QNMR…MAKE), and 421–444 (TIDD…QLLV).

It belongs to the tektin family. In terms of assembly, microtubule inner protein component of sperm flagellar doublet microtubules. Interacts with TEKT3. In terms of processing, ubiquitinated, leading to its degradation. Deubiquitinated by USP16, promoting its stability.

It is found in the cytoplasm. The protein resides in the cytoskeleton. It localises to the flagellum axoneme. In terms of biological role, sperm-specific microtubule inner protein (MIP) part of the dynein-decorated doublet microtubules (DMTs) in flagellar axoneme. Forms an extensive interaction network in different conformations that reinforces the helix bundle composed by other tektin proteins (TEKT1 to TEKT4) and MIPs to anchor the tektin bundle onto the tubulin wall of A-tubule of the sperm flagellum. The chain is Tektin-5 (TEKT5) from Homo sapiens (Human).